A 246-amino-acid polypeptide reads, in one-letter code: MEKWTAWEPQGADALRRFQGLLLDRRGRLHCQVLRLREVARRLERLRRRSLAANVAGSSLSAAGALAAIVGLSLSPVTLGASLVASAVGLGVATAGGAVTITSDLSLIFCNSREVRRVQEIAATCQDQMRELLSCLEFFCQWQGRGDRQLLQSGRDASMALYNSVYFIVFFGSRGFLIPRRAEGATKVSQAVLKAKIQKLSESLESCTGALDELSEQLESRVQLCTKAGRGHNLRNSPDLDAALFF.

A run of 2 helical transmembrane segments spans residues 50-72 (SLAA…IVGL) and 89-109 (GLGV…SLIF). A coiled-coil region spans residues 193–220 (LKAKIQKLSESLESCTGALDELSEQLES).

It belongs to the apolipoprotein L family. Present at low levels in brain vascular cells (at protein level).

The protein localises to the cell membrane. It is found in the cell junction. Its subcellular location is the cytoplasmic vesicle. The protein resides in the secretory vesicle. Is a modulator of endothelial barrier permeability, required for proper organization of endothelial cell-cell junctions and cytoskeleton. It also plays a role in the modulation of secretory autophagy. May affect blood-brain barrier permeability. The chain is Apolipoprotein L domain-containing protein 1 (Apold1) from Rattus norvegicus (Rat).